A 513-amino-acid chain; its full sequence is Sterol 14-alpha demethylase (513 aa).

The chain crosses the membrane as a helical span at residues 8–28 (AYALLAFVAIMALNVTYQFLF). N32 and N332 each carry an N-linked (GlcNAc...) asparagine glycan. C453 contacts heme.

This sequence belongs to the cytochrome P450 family. The cofactor is heme.

It localises to the endoplasmic reticulum membrane. It catalyses the reaction a 14alpha-methyl steroid + 3 reduced [NADPH--hemoprotein reductase] + 3 O2 = a Delta(14) steroid + formate + 3 oxidized [NADPH--hemoprotein reductase] + 4 H2O + 4 H(+). The catalysed reaction is a 14alpha-methyl steroid + reduced [NADPH--hemoprotein reductase] + O2 = a 14alpha-hydroxymethyl steroid + oxidized [NADPH--hemoprotein reductase] + H2O + H(+). The enzyme catalyses a 14alpha-hydroxymethyl steroid + reduced [NADPH--hemoprotein reductase] + O2 = a 14alpha-formyl steroid + oxidized [NADPH--hemoprotein reductase] + 2 H2O + H(+). It carries out the reaction a 14alpha-formyl steroid + reduced [NADPH--hemoprotein reductase] + O2 = a Delta(14) steroid + formate + oxidized [NADPH--hemoprotein reductase] + H2O + 2 H(+). It catalyses the reaction lanosterol + 3 reduced [NADPH--hemoprotein reductase] + 3 O2 = 4,4-dimethyl-5alpha-cholesta-8,14,24-trien-3beta-ol + formate + 3 oxidized [NADPH--hemoprotein reductase] + 4 H2O + 4 H(+). The catalysed reaction is lanosterol + reduced [NADPH--hemoprotein reductase] + O2 = 32-hydroxylanosterol + oxidized [NADPH--hemoprotein reductase] + H2O + H(+). The enzyme catalyses 32-hydroxylanosterol + reduced [NADPH--hemoprotein reductase] + O2 = 32-oxolanosterol + oxidized [NADPH--hemoprotein reductase] + 2 H2O + H(+). It carries out the reaction 32-oxolanosterol + reduced [NADPH--hemoprotein reductase] + O2 = 4,4-dimethyl-5alpha-cholesta-8,14,24-trien-3beta-ol + formate + oxidized [NADPH--hemoprotein reductase] + H2O + 2 H(+). It catalyses the reaction eburicol + 3 reduced [NADPH--hemoprotein reductase] + 3 O2 = 14-demethyleburicol + formate + 3 oxidized [NADPH--hemoprotein reductase] + 4 H2O + 4 H(+). The catalysed reaction is eburicol + reduced [NADPH--hemoprotein reductase] + O2 = 32-hydroxyeburicol + oxidized [NADPH--hemoprotein reductase] + H2O + H(+). The enzyme catalyses 32-hydroxyeburicol + reduced [NADPH--hemoprotein reductase] + O2 = 32-oxoeburicol + oxidized [NADPH--hemoprotein reductase] + 2 H2O + H(+). It carries out the reaction 32-oxoeburicol + reduced [NADPH--hemoprotein reductase] + O2 = 14-demethyleburicol + formate + oxidized [NADPH--hemoprotein reductase] + H2O + 2 H(+). Its pathway is steroid biosynthesis; sterol biosynthesis. Sterol 14alpha-demethylase, encoded by cyp51A, cyp51B and cyp51C, that plays a critical role in the third module of ergosterol biosynthesis pathway, being ergosterol the major sterol component in fungal membranes that participates in a variety of functions. The third module or late pathway involves the ergosterol synthesis itself through consecutive reactions that mainly occur in the endoplasmic reticulum (ER) membrane. In filamentous fungi, during the initial step of this module, lanosterol (lanosta-8,24-dien-3beta-ol) can be metabolized to eburicol. Sterol 14alpha-demethylase catalyzes the three-step oxidative removal of the 14alpha-methyl group (C-32) of both these sterols in the form of formate, and converts eburicol and lanosterol to 14-demethyleburicol (4,4,24-trimethylergosta-8,14,24(28)-trienol) and 4,4-dimethyl-5alpha-cholesta-8,14,24-trien-3beta-ol, respectively, which are further metabolized by other enzymes in the pathway to ergosterol. Can also use substrates not intrinsic to fungi, such as 24,25-dihydrolanosterol (DHL), producing 4,4'-dimethyl-8,14-cholestadien-3-beta-ol, but at lower rates than the endogenous substrates. Its function is as follows. As a target of azole drugs, plays a crucial role in azole drug susceptibility. This is Sterol 14-alpha demethylase from Aspergillus flavus (strain ATCC 200026 / FGSC A1120 / IAM 13836 / NRRL 3357 / JCM 12722 / SRRC 167).